A 535-amino-acid polypeptide reads, in one-letter code: Probable galacturonosyltransferase 12 (535 aa).

Residues 1–37 are Cytoplasmic-facing; sequence MQLHISPSLRHVTVVTGKGLREFIKVKVGSRRFSYQM. Residues 38–58 traverse the membrane as a helical; Signal-anchor for type II membrane protein segment; that stretch reads VFYSLLFFTFLLRFVFVLSTV. At 59–535 the chain is on the lumenal side; the sequence is DTIDGDPSPC…FIKSCHIRAS (477 aa). N-linked (GlcNAc...) asparagine glycans are attached at residues Asn397 and Asn430.

The protein belongs to the glycosyltransferase 8 family. As to expression, highly expressed in stems. Detected in roots, inflorescences, siliques, and leaves. Expressed in cells undergoing secondary wall thickening, including interfascicular fibers and primary and secondary xylem.

Its subcellular location is the golgi apparatus membrane. It functions in the pathway glycan metabolism; pectin biosynthesis. Involved in pectin assembly and/or distribution, and in the synthesis of secondary wall glucuronoxylan. Probably involved in the synthesis of the glycosyl sequence at the glucuronoxylan reducing end. May be involved in synthesis of a complex glycan primer for xylan synthesis. The protein is Probable galacturonosyltransferase 12 (GAUT12) of Arabidopsis thaliana (Mouse-ear cress).